The sequence spans 510 residues: Inositol-3-phosphate synthase (510 aa).

Residues glycine 70, glycine 71, asparagine 72, asparagine 73, aspartate 143, isoleucine 180, glutamine 190, arginine 193, threonine 230, alanine 231, asparagine 232, threonine 233, glycine 281, serine 282, aspartate 306, serine 309, asparagine 340, asparagine 341, aspartate 342, lysine 355, alanine 393, aspartate 394, aspartate 422, and serine 423 each contribute to the NAD(+) site.

It belongs to the myo-inositol 1-phosphate synthase family. NAD(+) is required as a cofactor.

It is found in the cytoplasm. The protein resides in the cytosol. It localises to the nucleus. It carries out the reaction D-glucose 6-phosphate = 1D-myo-inositol 3-phosphate. The protein operates within polyol metabolism; myo-inositol biosynthesis; myo-inositol from D-glucose 6-phosphate: step 1/2. Functionally, key enzyme in myo-inositol biosynthesis pathway that catalyzes the conversion of glucose 6-phosphate to 1-myo-inositol 1-phosphate in a NAD-dependent manner. This Brassica napus (Rape) protein is Inositol-3-phosphate synthase.